Consider the following 216-residue polypeptide: Large ribosomal subunit protein uL3 (216 aa).

Over residues 133–145 (GRATHGNSRSHNV) the composition is skewed to polar residues. The interval 133 to 153 (GRATHGNSRSHNVPGSIGMAQ) is disordered. Residue Gln153 is modified to N5-methylglutamine.

This sequence belongs to the universal ribosomal protein uL3 family. Part of the 50S ribosomal subunit. Forms a cluster with proteins L14 and L19. Methylated by PrmB.

One of the primary rRNA binding proteins, it binds directly near the 3'-end of the 23S rRNA, where it nucleates assembly of the 50S subunit. The protein is Large ribosomal subunit protein uL3 of Burkholderia cenocepacia (strain ATCC BAA-245 / DSM 16553 / LMG 16656 / NCTC 13227 / J2315 / CF5610) (Burkholderia cepacia (strain J2315)).